The sequence spans 140 residues: Large ribosomal subunit protein uL14 (140 aa).

The protein belongs to the universal ribosomal protein uL14 family.

The polypeptide is Large ribosomal subunit protein uL14 (rpl-23) (Caenorhabditis elegans).